An 84-amino-acid chain; its full sequence is Small nuclear ribonucleoprotein E (84 aa).

Residues 13 to 84 (INFIFKLLQQ…GDNITLIQAI (72 aa)) enclose the Sm domain.

Belongs to the snRNP Sm proteins family. In terms of assembly, component of the Sm core complex, present in spliceosomal snRNP U1, U2, U4/U6 and U5. The core complex contains smb1, smd1, smd2, smd3, sme1, smf1 and smg1 (Sm proteins B, D1, D2, D3, E, F and G, respectively), and is probably a heptameric ring structure.

The protein localises to the cytoplasm. It localises to the nucleus. Functionally, involved in pre-mRNA splicing. Binds and is required for the stability of snRNA U1, U2, U4 and U5 which contain a highly conserved structural motif called the Sm binding site. Involved in cap modification. In Schizosaccharomyces pombe (strain 972 / ATCC 24843) (Fission yeast), this protein is Small nuclear ribonucleoprotein E.